The sequence spans 492 residues: Polyamine oxidase 5 (492 aa).

FAD contacts are provided by Glu55, Arg63, Val244, and Glu431. Residues 490–492 carry the Microbody targeting signal motif; sequence SRL.

The protein belongs to the flavin monoamine oxidase family. It depends on FAD as a cofactor. Widely expressed.

The protein resides in the peroxisome. The enzyme catalyses spermine + O2 + H2O = 3-aminopropanal + spermidine + H2O2. It carries out the reaction norspermine + O2 + H2O = norspermidine + 3-aminopropanal + H2O2. The catalysed reaction is thermospermine + O2 + H2O = 3-aminopropanal + spermidine + H2O2. Its pathway is amine and polyamine degradation; spermine degradation. Flavoenzyme involved in polyamine back-conversion. Catalyzes the oxidation of the secondary amino group of polyamines, such as spermine. Substrate preference is spermine &gt; thermospermine &gt; norspermine. No activity detected when putrescine, spermidine or N(1)-acetylspermidine are used as substrates. Plays an important role in the regulation of polyamine intracellular concentration. May play a role in producing hydrogen peroxide during seed germination. In Oryza sativa subsp. japonica (Rice), this protein is Polyamine oxidase 5.